Consider the following 96-residue polypeptide: Protein YdfX (96 aa).

This is Protein YdfX (ydfX) from Escherichia coli (strain K12).